The following is a 460-amino-acid chain: ATP synthase subunit beta (460 aa).

Residue 150–157 coordinates ATP; that stretch reads GGAGVGKT.

It belongs to the ATPase alpha/beta chains family. In terms of assembly, F-type ATPases have 2 components, CF(1) - the catalytic core - and CF(0) - the membrane proton channel. CF(1) has five subunits: alpha(3), beta(3), gamma(1), delta(1), epsilon(1). CF(0) has three main subunits: a(1), b(2) and c(9-12). The alpha and beta chains form an alternating ring which encloses part of the gamma chain. CF(1) is attached to CF(0) by a central stalk formed by the gamma and epsilon chains, while a peripheral stalk is formed by the delta and b chains.

It is found in the cell inner membrane. The catalysed reaction is ATP + H2O + 4 H(+)(in) = ADP + phosphate + 5 H(+)(out). In terms of biological role, produces ATP from ADP in the presence of a proton gradient across the membrane. The catalytic sites are hosted primarily by the beta subunits. In Enterobacter sp. (strain 638), this protein is ATP synthase subunit beta.